The chain runs to 521 residues: Bifunctional purine biosynthesis protein PurH (521 aa).

The MGS-like domain occupies 1–145; that stretch reads MIKQALISVS…KNHRDVTVVV (145 aa).

Belongs to the PurH family.

The enzyme catalyses (6R)-10-formyltetrahydrofolate + 5-amino-1-(5-phospho-beta-D-ribosyl)imidazole-4-carboxamide = 5-formamido-1-(5-phospho-D-ribosyl)imidazole-4-carboxamide + (6S)-5,6,7,8-tetrahydrofolate. It catalyses the reaction IMP + H2O = 5-formamido-1-(5-phospho-D-ribosyl)imidazole-4-carboxamide. It functions in the pathway purine metabolism; IMP biosynthesis via de novo pathway; 5-formamido-1-(5-phospho-D-ribosyl)imidazole-4-carboxamide from 5-amino-1-(5-phospho-D-ribosyl)imidazole-4-carboxamide (10-formyl THF route): step 1/1. The protein operates within purine metabolism; IMP biosynthesis via de novo pathway; IMP from 5-formamido-1-(5-phospho-D-ribosyl)imidazole-4-carboxamide: step 1/1. The chain is Bifunctional purine biosynthesis protein PurH from Burkholderia cenocepacia (strain ATCC BAA-245 / DSM 16553 / LMG 16656 / NCTC 13227 / J2315 / CF5610) (Burkholderia cepacia (strain J2315)).